The following is a 42-amino-acid chain: Large ribosomal subunit protein P2 (42 aa).

Belongs to the eukaryotic ribosomal protein P1/P2 family. As to quaternary structure, P1 and P2 exist as dimers at the large ribosomal subunit. Post-translationally, phosphorylated.

Its function is as follows. Plays an important role in the elongation step of protein synthesis. The sequence is that of Large ribosomal subunit protein P2 from Triticum aestivum (Wheat).